Reading from the N-terminus, the 106-residue chain is Putative double-stranded DNA mimic protein PM0536 (106 aa).

Belongs to the putative dsDNA mimic protein family.

In terms of biological role, may act as a double-stranded DNA (dsDNA) mimic. Probably regulates the activity of a dsDNA-binding protein. The sequence is that of Putative double-stranded DNA mimic protein PM0536 from Pasteurella multocida (strain Pm70).